Here is a 363-residue protein sequence, read N- to C-terminus: Regulator of G-protein signaling rgs-3 (363 aa).

The disordered stretch occupies residues 1 to 70; the sequence is MWRSYKAETP…NSSATSPTPS (70 aa). Residues 21 to 35 are compositionally biased toward basic and acidic residues; it reads LNLHDSSESDHEGRQ. Composition is skewed to low complexity over residues 36-50 and 58-70; these read SRSA…APAS and PITN…PTPS. RGS domains lie at 112 to 225 and 240 to 359; these read NCAN…LEYL and SFEG…IDLL.

In terms of processing, may be phosphorylated and activated by egl-4.

Functionally, modulates chemotaxis responses by regulating positively the sensitivity to CO2 levels in BAG neurons and by regulating negatively the sensitivity to quinine in ASH sensory neurons. This chain is Regulator of G-protein signaling rgs-3 (rgs-3), found in Caenorhabditis elegans.